A 243-amino-acid polypeptide reads, in one-letter code: Homeobox protein nob-1 (243 aa).

The segment covering 1 to 12 has biased composition (polar residues); that stretch reads MISVMQQMINND. 2 disordered regions span residues 1–23 and 40–67; these read MISV…SITS and SIQG…TGMV. A DNA-binding region (homeobox) is located at residues 162 to 221; the sequence is GKKKRQPYKKDQISRLEYEYSVNQYLTNKRRSELSAQLMLDEKQVKVWFQNRRMKDKKLR.

Belongs to the abd-b homeobox family. In terms of assembly, interacts with nuclear receptor nhr-25. Interacts with geminin homolog gmn-1. Interacts with homeodomain protein ceh-20.

The protein resides in the nucleus. Transcription factor, involved in posterior embryonic patterning, morphogenetic movements of the posterior hypodermis, and cell fate specification. Binds to the 5'-TAGT-3' motif in regulatory elements of genes, including Meis protein psa-3 and microRNA mir-57. Involved in a negative regulatory loop with mir-57 to specify posterior cell identities. Required for asymmetric division of the T hypodermal cell, acting via the regulation of asymmetric expression of psa-3 in cooperation with ceh-20 and the Wnt-MAPK pathway. Involved in the regulation of the onset of non-apoptotic cell death in the linker cell, acting together with the Wnt signaling pathway. Involved in promoting embryogenesis, in concert with orphan nuclear receptor nhr-25. May regulate expression of transcription factor dmd-3. This Caenorhabditis elegans protein is Homeobox protein nob-1.